The sequence spans 1475 residues: ABC transporter G family member 15 (1475 aa).

The segment covering 1 to 10 (MDSNENKKNG) has biased composition (basic and acidic residues). 2 disordered regions span residues 1–40 (MDSN…EEHI) and 75–94 (NIKN…GGGA). A compositionally biased stretch (low complexity) spans 17–34 (NIINNNNDNNNNNDNNNN). Positions 25–67 (NNNNNDNNNNSTEEHIESVEQSIKEFNNVANELETEFRDYLVE) form a coiled coil. The ABC transporter 1 domain maps to 155-404 (LNVKNWFKKS…FIDMGFECEP (250 aa)). One can recognise an ABC transmembrane type-2 1 domain in the interval 507–753 (WGDKFSLISR…FTGERYLEKS (247 aa)). The next 5 helical transmembrane spans lie at 596 to 616 (IPII…MFGL), 623 to 641 (FFIN…NNLY), 653 to 673 (IGQN…SYII), 680 to 699 (VWFG…RALM), and 770 to 790 (ICIV…VLNI). The 246-residue stretch at 842–1087 (FTWQHMYYSV…LTSYFQRHGV (246 aa)) folds into the ABC transporter 2 domain. 879–886 (GSSGAGKT) lines the ATP pocket. 6 consecutive transmembrane segments (helical) span residues 1180-1200 (GYSY…GWTF), 1216-1236 (FIFN…PQFI), 1256-1276 (FALS…TIFF), 1293-1313 (FFFW…GQAI), 1323-1343 (ALNL…VLVI), and 1449-1469 (FGII…FVFL). Residues 1180-1404 (GYSYGTFIQS…TCSDYAFEFL (225 aa)) form the ABC transmembrane type-2 2 domain.

This sequence belongs to the ABC transporter superfamily. ABCG family. PDR (TC 3.A.1.205) subfamily.

It localises to the membrane. The protein is ABC transporter G family member 15 (abcG15) of Dictyostelium discoideum (Social amoeba).